The primary structure comprises 130 residues: RxLR effector protein PITG_14783 (130 aa).

A signal peptide spans 1 to 20 (MRLPYVFAATMATLLVSSNA). A disordered region spans residues 27-58 (AMLSSPNEQHQRQLRSHQTPVEDQEPDEERSL). The RxLR-dEER motif lies at 38–56 (RQLRSHQTPVEDQEPDEER).

Belongs to the RxLR effector family.

It is found in the secreted. The protein localises to the host nucleus. It localises to the host cytoplasm. Functionally, effector that enhances P.infestans colonization of Nicotiana benthamiana leaves. The protein is RxLR effector protein PITG_14783 of Phytophthora infestans (strain T30-4) (Potato late blight agent).